A 279-amino-acid polypeptide reads, in one-letter code: Bifunctional protein FolD (279 aa).

NADP(+) is bound by residues 165-167 (GRS), S190, and I231.

It belongs to the tetrahydrofolate dehydrogenase/cyclohydrolase family. As to quaternary structure, homodimer.

The enzyme catalyses (6R)-5,10-methylene-5,6,7,8-tetrahydrofolate + NADP(+) = (6R)-5,10-methenyltetrahydrofolate + NADPH. It carries out the reaction (6R)-5,10-methenyltetrahydrofolate + H2O = (6R)-10-formyltetrahydrofolate + H(+). It functions in the pathway one-carbon metabolism; tetrahydrofolate interconversion. In terms of biological role, catalyzes the oxidation of 5,10-methylenetetrahydrofolate to 5,10-methenyltetrahydrofolate and then the hydrolysis of 5,10-methenyltetrahydrofolate to 10-formyltetrahydrofolate. In Halalkalibacterium halodurans (strain ATCC BAA-125 / DSM 18197 / FERM 7344 / JCM 9153 / C-125) (Bacillus halodurans), this protein is Bifunctional protein FolD.